Consider the following 858-residue polypeptide: Heat shock protein 105 kDa (858 aa).

Position 2 is an N-acetylserine (serine 2). An N6-acetyllysine modification is found at lysine 471. 2 disordered regions span residues 500–585 (KVPT…PPEA) and 801–858 (VNQP…MDLD). Acidic residues predominate over residues 504–515 (EEDDGSSVEADM). Phosphoserine is present on residues serine 509 and serine 510. The span at 533-549 (QQDNSEAGTQPQVQTDG) shows a compositional bias: polar residues. Serine 558 bears the Phosphoserine mark. Composition is skewed to basic and acidic residues over residues 564–585 (EENKIPDADKANEKKVDQPPEA) and 806–815 (PKIESPKLER). Serine 810 is modified (phosphoserine). Threonine 816 bears the Phosphothreonine mark. Positions 822-834 (LDKKEDLEGKDNF) are enriched in basic and acidic residues.

This sequence belongs to the heat shock protein 70 family. In terms of assembly, interacts with HSPA8/HSC70. Interacts with HSPA1A (via NBD) and HSPA1B (via NBD). Phosphorylation on Ser-509 may be important for regulation of the HSPA8/HSC70 chaperone activity. As to expression, predominantly expressed in the brain and also found in the liver.

It localises to the cytoplasm. Functionally, acts as a nucleotide-exchange factor (NEF) for chaperone proteins HSPA1A and HSPA1B, promoting the release of ADP from HSPA1A/B thereby triggering substrate release. Prevents the aggregation of denatured proteins in cells under severe stress, on which the ATP levels decrease markedly. Inhibits HSPA8/HSC70 ATPase and chaperone activities. This is Heat shock protein 105 kDa (HSPH1) from Cricetulus griseus (Chinese hamster).